The chain runs to 106 residues: Malonate decarboxylase acyl carrier protein (106 aa).

Position 28 is an O-(phosphoribosyl dephospho-coenzyme A)serine (serine 28).

The protein belongs to the MdcC family. Post-translationally, covalently binds the prosthetic group of malonate decarboxylase.

Its subcellular location is the cytoplasm. In terms of biological role, subunit of malonate decarboxylase, it is an acyl carrier protein to which acetyl and malonyl thioester residues are bound via a 2'-(5''-phosphoribosyl)-3'-dephospho-CoA prosthetic group and turn over during the catalytic mechanism. The sequence is that of Malonate decarboxylase acyl carrier protein from Stenotrophomonas maltophilia (strain R551-3).